A 463-amino-acid polypeptide reads, in one-letter code: ATP synthase subunit beta (463 aa).

Position 151–158 (151–158 (GGAGVGKT)) interacts with ATP.

The protein belongs to the ATPase alpha/beta chains family. F-type ATPases have 2 components, CF(1) - the catalytic core - and CF(0) - the membrane proton channel. CF(1) has five subunits: alpha(3), beta(3), gamma(1), delta(1), epsilon(1). CF(0) has three main subunits: a(1), b(2) and c(9-12). The alpha and beta chains form an alternating ring which encloses part of the gamma chain. CF(1) is attached to CF(0) by a central stalk formed by the gamma and epsilon chains, while a peripheral stalk is formed by the delta and b chains.

It localises to the cell membrane. It carries out the reaction ATP + H2O + 4 H(+)(in) = ADP + phosphate + 5 H(+)(out). Its function is as follows. Produces ATP from ADP in the presence of a proton gradient across the membrane. The catalytic sites are hosted primarily by the beta subunits. This chain is ATP synthase subunit beta, found in Clostridium botulinum (strain Okra / Type B1).